Here is a 341-residue protein sequence, read N- to C-terminus: Methionine import ATP-binding protein MetN 2 (341 aa).

Residues 2–241 (IELKEVVKEY…PQHTVTKRFV (240 aa)) form the ABC transporter domain. 38-45 (GFSGAGKS) provides a ligand contact to ATP.

This sequence belongs to the ABC transporter superfamily. Methionine importer (TC 3.A.1.24) family. The complex is composed of two ATP-binding proteins (MetN), two transmembrane proteins (MetI) and a solute-binding protein (MetQ).

Its subcellular location is the cell membrane. It carries out the reaction L-methionine(out) + ATP + H2O = L-methionine(in) + ADP + phosphate + H(+). The catalysed reaction is D-methionine(out) + ATP + H2O = D-methionine(in) + ADP + phosphate + H(+). In terms of biological role, part of the ABC transporter complex MetNIQ involved in methionine import. Responsible for energy coupling to the transport system. The protein is Methionine import ATP-binding protein MetN 2 of Staphylococcus aureus (strain bovine RF122 / ET3-1).